We begin with the raw amino-acid sequence, 236 residues long: Rho-related GTP-binding protein RhoV (236 aa).

Residues 1–27 (MPPRELSEAEPPPLPASTPPPRRRSAP) are disordered. A compositionally biased stretch (pro residues) spans 10 to 20 (EPPPLPASTPP). Ser-25 carries the post-translational modification Phosphoserine. Residues 38 to 45 (GDGAVGKS), 85 to 89 (DTAGQ), and 143 to 146 (TQAD) each bind GTP. A lipid anchor (S-palmitoyl cysteine) is attached at Cys-234.

It belongs to the small GTPase superfamily. Rho family. Interacts with PAK2. The cofactor is Mg(2+).

The protein resides in the cell membrane. It localises to the endosome membrane. Plays a role in the control of the actin cytoskeleton via activation of the JNK pathway. The chain is Rho-related GTP-binding protein RhoV from Mus musculus (Mouse).